An 82-amino-acid chain; its full sequence is Small ribosomal subunit protein bS16 (82 aa).

The protein belongs to the bacterial ribosomal protein bS16 family.

The polypeptide is Small ribosomal subunit protein bS16 (Gloeothece citriformis (strain PCC 7424) (Cyanothece sp. (strain PCC 7424))).